The sequence spans 233 residues: Biosynthetic peptidoglycan transglycosylase (233 aa).

Residues 8–28 (LIALPVGIFIFFNAYVYGNII) form a helical membrane-spanning segment.

The protein belongs to the glycosyltransferase 51 family.

It is found in the cell inner membrane. The catalysed reaction is [GlcNAc-(1-&gt;4)-Mur2Ac(oyl-L-Ala-gamma-D-Glu-L-Lys-D-Ala-D-Ala)](n)-di-trans,octa-cis-undecaprenyl diphosphate + beta-D-GlcNAc-(1-&gt;4)-Mur2Ac(oyl-L-Ala-gamma-D-Glu-L-Lys-D-Ala-D-Ala)-di-trans,octa-cis-undecaprenyl diphosphate = [GlcNAc-(1-&gt;4)-Mur2Ac(oyl-L-Ala-gamma-D-Glu-L-Lys-D-Ala-D-Ala)](n+1)-di-trans,octa-cis-undecaprenyl diphosphate + di-trans,octa-cis-undecaprenyl diphosphate + H(+). The protein operates within cell wall biogenesis; peptidoglycan biosynthesis. Its function is as follows. Peptidoglycan polymerase that catalyzes glycan chain elongation from lipid-linked precursors. In Neisseria gonorrhoeae (strain ATCC 700825 / FA 1090), this protein is Biosynthetic peptidoglycan transglycosylase.